Reading from the N-terminus, the 452-residue chain is Putrescine hydroxycinnamoyltransferase (452 aa).

H151 acts as the Proton acceptor in catalysis. The segment at 213-234 (PAAGVDGDVGGDHKQQHGHGGE) is disordered. Basic and acidic residues predominate over residues 222-234 (GGDHKQQHGHGGE). Residue D398 is the Proton acceptor of the active site.

It belongs to the plant acyltransferase family. In terms of tissue distribution, highly expressed in roots. Expressed at low levels in flowers.

Its function is as follows. Hydroxycinnamoyl transferase that catalyzes the transfer of an acyl from p-coumaryol-CoA to putrescine, to produce coumaroyl putrescine. Can use feruloyl-CoA, caffeoyl-CoA and sinapoyl-CoA as acyl donors. Seems to be able to transfer the acyl group from feruloyl-CoA to the acyl acceptors agmatine and spermidine. In Oryza sativa subsp. japonica (Rice), this protein is Putrescine hydroxycinnamoyltransferase.